The primary structure comprises 264 residues: uncharacterized protein (264 aa).

6 helical membrane passes run 1 to 21 (MLLG…SVSL), 43 to 63 (FFGV…NGFV), 95 to 115 (VVGL…LSSL), 146 to 166 (IATW…LGGL), 181 to 201 (GWLA…QPFV), and 215 to 235 (IVAN…MFFP).

To M.pneumoniae MPN_308 C-terminal region.

The protein localises to the cell membrane. This is an uncharacterized protein from Mycoplasma pneumoniae (strain ATCC 29342 / M129 / Subtype 1) (Mycoplasmoides pneumoniae).